We begin with the raw amino-acid sequence, 163 residues long: Nucleotide-binding protein YajQ (163 aa).

This sequence belongs to the YajQ family.

Functionally, nucleotide-binding protein. The protein is Nucleotide-binding protein YajQ of Escherichia coli (strain K12 / DH10B).